The following is a 361-amino-acid chain: Phospho-N-acetylmuramoyl-pentapeptide-transferase (361 aa).

Transmembrane regions (helical) follow at residues 25-45 (RGIL…PAVI), 73-93 (TMGG…WGDL), 98-118 (VWLV…DDWI), 139-159 (IFGL…AAIT), 168-188 (IALP…IVGF), 200-220 (GLAI…AYAS), 237-257 (AGEL…FLWF), 264-284 (VFMG…IAVI), 289-309 (MVLV…IIQV), and 339-359 (VIVR…ATLK).

Belongs to the glycosyltransferase 4 family. MraY subfamily. The cofactor is Mg(2+).

The protein localises to the cell inner membrane. The catalysed reaction is UDP-N-acetyl-alpha-D-muramoyl-L-alanyl-gamma-D-glutamyl-meso-2,6-diaminopimeloyl-D-alanyl-D-alanine + di-trans,octa-cis-undecaprenyl phosphate = di-trans,octa-cis-undecaprenyl diphospho-N-acetyl-alpha-D-muramoyl-L-alanyl-D-glutamyl-meso-2,6-diaminopimeloyl-D-alanyl-D-alanine + UMP. The protein operates within cell wall biogenesis; peptidoglycan biosynthesis. Functionally, catalyzes the initial step of the lipid cycle reactions in the biosynthesis of the cell wall peptidoglycan: transfers peptidoglycan precursor phospho-MurNAc-pentapeptide from UDP-MurNAc-pentapeptide onto the lipid carrier undecaprenyl phosphate, yielding undecaprenyl-pyrophosphoryl-MurNAc-pentapeptide, known as lipid I. The sequence is that of Phospho-N-acetylmuramoyl-pentapeptide-transferase from Xanthomonas oryzae pv. oryzae (strain MAFF 311018).